The following is a 140-amino-acid chain: Profilin-2 (140 aa).

Ala2 is modified (N-acetylalanine).

Belongs to the profilin family. In terms of assembly, occurs in many kinds of cells as a complex with monomeric actin in a 1:1 ratio. Interacts with PFN2. Interacts with ACTMAP (via N-terminus); the interaction may facilitate efficient cleavage of the acetylated N-terminus of immature actin by ACTMAP. In terms of tissue distribution, highly expressed in brain, skeletal muscle and kidney and less strongly in heart, placenta, lung and liver.

The protein resides in the cytoplasm. It is found in the cytoskeleton. In terms of biological role, binds to actin and affects the structure of the cytoskeleton. At high concentrations, profilin prevents the polymerization of actin, whereas it enhances it at low concentrations. By binding to PIP2, it inhibits the formation of IP3 and DG. The polypeptide is Profilin-2 (PFN2) (Homo sapiens (Human)).